We begin with the raw amino-acid sequence, 248 residues long: MTPIFFNQQYPTLVDICARWQLVYDANATFELRFESDTLSLHKRDEPKLDGIVVDFVTGAVAHRRKFGGGRGQSIAKAVGLKQGVMPSVVDGTAGLGRDAFVLASLGCTVTMVERHPVVAALLEDGLRRAYQDAEIGDWMRERMRLFHGSSLEALSKLAQEIDVVYLDPMYPHRDKSALVKKEMRVFQSLVGADLDADGLLAPALALATKRVVVKRPDYAEDLDGVKPNTVIETKKNRFDVYVKAAMK.

Residues 98 to 99 (RD), 114 to 115 (ER), 150 to 151 (SS), and Asp168 each bind S-adenosyl-L-methionine.

The protein belongs to the methyltransferase superfamily. RsmJ family.

Its subcellular location is the cytoplasm. It carries out the reaction guanosine(1516) in 16S rRNA + S-adenosyl-L-methionine = N(2)-methylguanosine(1516) in 16S rRNA + S-adenosyl-L-homocysteine + H(+). Functionally, specifically methylates the guanosine in position 1516 of 16S rRNA. The chain is Ribosomal RNA small subunit methyltransferase J from Shewanella baltica (strain OS185).